A 285-amino-acid chain; its full sequence is MANLRIIKRRIRSVRNIAKITRAMEMIAASKMKKAQERGLAGRPYSEKITEVIAALAALPQSGEILHPLLERRPVKKIAILHITPDRGQCGGLVANINRKTGTFIMEQKVSVSAVVVGRKGVDFIRRIRQQMRAEFINLGDKPDYLDTLPISRVIMDDFMSGEIDQVFIAYTQFVSTAIQNPVLEQLLPVVPVEFPPGQNLEYIYEPESAAVLNSLLPRFVEMSVYHAILESIASEQSARMVAMRNATDNAKELIGELTLVYNKARQESITNELLDIVGGAAALA.

Belongs to the ATPase gamma chain family. In terms of assembly, F-type ATPases have 2 components, CF(1) - the catalytic core - and CF(0) - the membrane proton channel. CF(1) has five subunits: alpha(3), beta(3), gamma(1), delta(1), epsilon(1). CF(0) has three main subunits: a, b and c.

Its subcellular location is the cell membrane. Functionally, produces ATP from ADP in the presence of a proton gradient across the membrane. The gamma chain is believed to be important in regulating ATPase activity and the flow of protons through the CF(0) complex. The polypeptide is ATP synthase gamma chain (Dehalococcoides mccartyi (strain ATCC BAA-2100 / JCM 16839 / KCTC 5957 / BAV1)).